The sequence spans 143 residues: Ninjurin-2 (143 aa).

At 1 to 61 (MESDRETIHL…KSVLQQGPFA (61 aa)) the chain is on the extracellular side. Residues 26 to 38 (NFYATKKSVAESM) are helix alpha1. Positions 39–58 (LDVALFMSNAMRLKSVLQQG) are helix alpha2. A helical transmembrane segment spans residues 62–93 (EYYTTLVTLIIVSLLLQVVISLLLVFIAILNL). Topologically, residues 94–97 (NEVE) are cytoplasmic. The helical transmembrane segment at 98–127 (NQRHLNKLNNAATILVFITVVINIFITAFG) threads the bilayer. Lysine 104 serves as a coordination point for cholesterol. Topologically, residues 128–143 (AHHAASMAARTSSNPI) are extracellular.

It belongs to the ninjurin family. Homooligomer; in response to stimuli, homooligomerizes into filaments. In contrast to NINJ1, the filament is curved toward the intracellular space, preventing its circularization on a relatively flat membrane to mediate plasma membrane rupture: curvature is caused by cholesterol-binding at the cytoplasmic leaflet.

Its subcellular location is the cell membrane. Its function is as follows. Its role in unclear. In contrast to NINJ1 paralog, does not mediate plasma membrane rupture (cytolysis) downstream of necroptotic and pyroptotic programmed cell death. While it is able to oligomerize and form filaments, filaments are curved toward the intracellular space, preventing circularization to mediate plasma membrane rupture. May act as a homophilic transmembrane adhesion molecule involved in nerve regeneration. Promotes axonal growth. The polypeptide is Ninjurin-2 (Ninj2) (Mus musculus (Mouse)).